Here is a 190-residue protein sequence, read N- to C-terminus: Dynein axonemal light chain 1 (190 aa).

N-acetylalanine is present on A2. LRR repeat units follow at residues 47-69 (LANC…LNGL), 70-93 (KNLR…AVGD), 95-114 (LEEL…IHVM), and 115-138 (RKLK…KLAE). S56 is subject to Phosphoserine.

This sequence belongs to the dynein light chain LC1-type family. Interacts with ZMYND10 (via C-terminus). Interacts with DNAH5, a outer arm dynein heavy chain. Interacts with tubulin located within the A-tubule of the outer doublets in a ATP-independent manner.

The protein localises to the cytoplasm. It localises to the cytoskeleton. The protein resides in the cilium axoneme. Part of the multisubunit axonemal ATPase complexes that generate the force for cilia motility and govern beat frequency. Component of the outer arm dynein (ODA). May be involved in a mechanosensory feedback mechanism controlling ODA activity based on external conformational cues by tethering the outer arm dynein heavy chain (DNAH5) to the microtubule within the axoneme. Important for ciliary function in the airways and for the function of the cilia that produce the nodal flow essential for the determination of the left-right asymmetry. The sequence is that of Dynein axonemal light chain 1 from Rattus norvegicus (Rat).